We begin with the raw amino-acid sequence, 371 residues long: Serine/threonine-protein kinase 17B (371 aa).

One can recognise a Protein kinase domain in the interval 33 to 293; the sequence is TLTPKELGRG…AESCLSHSWL (261 aa). ATP contacts are provided by residues 39–47 and K62; that span reads LGRGKFAVV. The active-site Proton acceptor is D158. The tract at residues 308 to 345 is disordered; the sequence is SESSQTQDLSLRSSEDKTPKSCNGSCGDREDKENIPED. Residues 309 to 319 are compositionally biased toward polar residues; it reads ESSQTQDLSLR.

This sequence belongs to the protein kinase superfamily. CAMK Ser/Thr protein kinase family. DAP kinase subfamily. Interacts with CHP1; the interaction induces CHP1 to translocate from the Golgi to the nucleus. Autophosphorylated. As to expression, highly expressed in thymus, spleen, and testis, lower levels present in the brain.

The protein resides in the nucleus. It localises to the cell membrane. Its subcellular location is the endoplasmic reticulum-Golgi intermediate compartment. The catalysed reaction is L-seryl-[protein] + ATP = O-phospho-L-seryl-[protein] + ADP + H(+). It carries out the reaction L-threonyl-[protein] + ATP = O-phospho-L-threonyl-[protein] + ADP + H(+). In terms of biological role, acts as a positive regulator of apoptosis. Phosphorylates myosin light chains. The polypeptide is Serine/threonine-protein kinase 17B (Stk17b) (Rattus norvegicus (Rat)).